A 445-amino-acid polypeptide reads, in one-letter code: Exodeoxyribonuclease 7 large subunit (445 aa).

The protein belongs to the XseA family. In terms of assembly, heterooligomer composed of large and small subunits.

Its subcellular location is the cytoplasm. The enzyme catalyses Exonucleolytic cleavage in either 5'- to 3'- or 3'- to 5'-direction to yield nucleoside 5'-phosphates.. Functionally, bidirectionally degrades single-stranded DNA into large acid-insoluble oligonucleotides, which are then degraded further into small acid-soluble oligonucleotides. This chain is Exodeoxyribonuclease 7 large subunit, found in Xanthomonas axonopodis pv. citri (strain 306).